A 197-amino-acid polypeptide reads, in one-letter code: NADH-quinone oxidoreductase subunit C (197 aa).

It belongs to the complex I 30 kDa subunit family. As to quaternary structure, NDH-1 is composed of 14 different subunits. Subunits NuoB, C, D, E, F, and G constitute the peripheral sector of the complex.

The protein resides in the cell inner membrane. It carries out the reaction a quinone + NADH + 5 H(+)(in) = a quinol + NAD(+) + 4 H(+)(out). Its function is as follows. NDH-1 shuttles electrons from NADH, via FMN and iron-sulfur (Fe-S) centers, to quinones in the respiratory chain. The immediate electron acceptor for the enzyme in this species is believed to be ubiquinone. Couples the redox reaction to proton translocation (for every two electrons transferred, four hydrogen ions are translocated across the cytoplasmic membrane), and thus conserves the redox energy in a proton gradient. This is NADH-quinone oxidoreductase subunit C from Rickettsia prowazekii (strain Madrid E).